Consider the following 443-residue polypeptide: Serine/threonine-protein phosphatase 2A 55 kDa regulatory subunit B beta isoform (443 aa).

4 WD repeats span residues 22–61, 87–128, 171–209, and 220–260; these read TEADIISTVEFNHTGELLATGDKGGRVVIFQREQESKNQV, EIEE…KRPE, AHTYHINSISVNSDYETYMSADDLRINLWNFEITNQSFN, and ELTE…LCDR. A Phosphoserine modification is found at S275. WD repeat units follow at residues 279–317, 334–375, and 410–442; these read EIISSISDVKFSHSGRYIMTRDYLTVKVWDLNMENRPIE, ENDC…DVTL, and DFSKKILHTAWHPSENIIAVAATNNLYIFQDKV. Y295 carries the post-translational modification Phosphotyrosine. A Phosphothreonine modification is found at T298.

It belongs to the phosphatase 2A regulatory subunit B family. As to quaternary structure, PP2A consists of a common heterodimeric core enzyme, composed of a 36 kDa catalytic subunit (subunit C) and a 65 kDa constant regulatory subunit (PR65 or subunit A), that associates with a variety of regulatory subunits. Proteins that associate with the core dimer include three families of regulatory subunits B (the R2/B/PR55/B55, R3/B''/PR72/PR130/PR59 and R5/B'/B56 families), the 48 kDa variable regulatory subunit, viral proteins, and cell signaling molecules. Interacts with TOMM22. Interacts with IER5 (via N- and C-terminal regions).

Its subcellular location is the cytoplasm. It localises to the cytoskeleton. The protein resides in the membrane. Its function is as follows. The B regulatory subunit might modulate substrate selectivity and catalytic activity, and might also direct the localization of the catalytic enzyme to a particular subcellular compartment. This chain is Serine/threonine-protein phosphatase 2A 55 kDa regulatory subunit B beta isoform (PPP2R2B), found in Bos taurus (Bovine).